The following is a 402-amino-acid chain: CCA-adding enzyme (402 aa).

2 residues coordinate ATP: G32 and R35. Residues G32 and R35 each coordinate CTP. Mg(2+)-binding residues include D45 and D47. Positions 116, 159, 162, 165, and 168 each coordinate ATP. 5 residues coordinate CTP: R116, D159, R162, R165, and R168.

The protein belongs to the tRNA nucleotidyltransferase/poly(A) polymerase family. Bacterial CCA-adding enzyme type 3 subfamily. In terms of assembly, homodimer. The cofactor is Mg(2+).

It carries out the reaction a tRNA precursor + 2 CTP + ATP = a tRNA with a 3' CCA end + 3 diphosphate. The enzyme catalyses a tRNA with a 3' CCA end + 2 CTP + ATP = a tRNA with a 3' CCACCA end + 3 diphosphate. In terms of biological role, catalyzes the addition and repair of the essential 3'-terminal CCA sequence in tRNAs without using a nucleic acid template. Adds these three nucleotides in the order of C, C, and A to the tRNA nucleotide-73, using CTP and ATP as substrates and producing inorganic pyrophosphate. tRNA 3'-terminal CCA addition is required both for tRNA processing and repair. Also involved in tRNA surveillance by mediating tandem CCA addition to generate a CCACCA at the 3' terminus of unstable tRNAs. While stable tRNAs receive only 3'-terminal CCA, unstable tRNAs are marked with CCACCA and rapidly degraded. This is CCA-adding enzyme from Streptococcus pyogenes serotype M3 (strain ATCC BAA-595 / MGAS315).